We begin with the raw amino-acid sequence, 179 residues long: Peptide deformylase (179 aa).

Residues Cys-102 and His-144 each contribute to the Fe cation site. Residue Glu-145 is part of the active site. Residue His-148 participates in Fe cation binding.

It belongs to the polypeptide deformylase family. It depends on Fe(2+) as a cofactor.

The catalysed reaction is N-terminal N-formyl-L-methionyl-[peptide] + H2O = N-terminal L-methionyl-[peptide] + formate. Functionally, removes the formyl group from the N-terminal Met of newly synthesized proteins. Requires at least a dipeptide for an efficient rate of reaction. N-terminal L-methionine is a prerequisite for activity but the enzyme has broad specificity at other positions. This chain is Peptide deformylase, found in Wolbachia sp. subsp. Drosophila simulans (strain wRi).